Here is a 388-residue protein sequence, read N- to C-terminus: 2-methylene-furan-3-one reductase (388 aa).

A chloroplast-targeting transit peptide spans 1–60 (MEALLSSTTLQLKPLHPPSSFSSLHSPFSSISVLRVKGSKKAETFIQRSNFSTVLPLRVS). NADP(+) is bound by residues Lys-125, 240-241 (GV), 263-266 (STGK), Tyr-281, 330-332 (FVV), and 377-378 (RA). Lys-125 is a substrate binding site.

This sequence belongs to the zinc-containing alcohol dehydrogenase family. Quinone oxidoreductase subfamily. In terms of assembly, monomer.

The protein resides in the plastid. The protein localises to the chloroplast. It catalyses the reaction 4-hydroxy-2,5-dimethyl-furan-3(2H)-one + NADP(+) = 4-hydroxy-5-methyl-2-methylenefuran-3(2H)-one + NADPH + H(+). Enone oxidoreductase involved in the biosynthesis of 4-hydroxy-2,5-dimethyl-3(2H)-furanone (HDMF or furaneol). Can use both NADH and NADPH as the electron donor. This Solanum lycopersicum (Tomato) protein is 2-methylene-furan-3-one reductase (EO).